A 445-amino-acid chain; its full sequence is Tryptophan 5-hydroxylase 1 (445 aa).

Positions 19 to 94 (AIIFSLKNEV…SIVSMNPTEH (76 aa)) constitute an ACT domain. S58 is modified (phosphoserine; by PKA). Positions 236, 258, and 266 each coordinate L-tryptophan. H273, H278, and E318 together coordinate Fe cation. The L-tryptophan site is built by S337 and I367.

Belongs to the biopterin-dependent aromatic amino acid hydroxylase family. In terms of assembly, homotetramer. The cofactor is Fe(2+).

The enzyme catalyses (6R)-L-erythro-5,6,7,8-tetrahydrobiopterin + L-tryptophan + O2 = 5-hydroxy-L-tryptophan + (4aS,6R)-4a-hydroxy-L-erythro-5,6,7,8-tetrahydrobiopterin. Its pathway is aromatic compound metabolism; serotonin biosynthesis; serotonin from L-tryptophan: step 1/2. In terms of biological role, oxidizes L-tryptophan to 5-hydroxy-l-tryptophan in the rate-determining step of serotonin biosynthesis. This Gallus gallus (Chicken) protein is Tryptophan 5-hydroxylase 1 (TPH1).